The sequence spans 753 residues: 5-methyltetrahydropteroyltriglutamate--homocysteine methyltransferase (753 aa).

5-methyltetrahydropteroyltri-L-glutamate-binding positions include 17–20 and K117; that span reads RELK. Residues 431-433 and E484 each bind L-homocysteine; that span reads IGS. Residues 431 to 433 and E484 contribute to the L-methionine site; that span reads IGS. Residues 515–516 and W561 each bind 5-methyltetrahydropteroyltri-L-glutamate; that span reads RC. Residue D599 participates in L-homocysteine binding. D599 contacts L-methionine. E605 lines the 5-methyltetrahydropteroyltri-L-glutamate pocket. Zn(2+)-binding residues include H641, C643, and E665. Residue H694 is the Proton donor of the active site. C726 provides a ligand contact to Zn(2+).

It belongs to the vitamin-B12 independent methionine synthase family. Zn(2+) serves as cofactor.

The enzyme catalyses 5-methyltetrahydropteroyltri-L-glutamate + L-homocysteine = tetrahydropteroyltri-L-glutamate + L-methionine. It functions in the pathway amino-acid biosynthesis; L-methionine biosynthesis via de novo pathway; L-methionine from L-homocysteine (MetE route): step 1/1. Functionally, catalyzes the transfer of a methyl group from 5-methyltetrahydrofolate to homocysteine resulting in methionine formation. The chain is 5-methyltetrahydropteroyltriglutamate--homocysteine methyltransferase from Escherichia coli O6:K15:H31 (strain 536 / UPEC).